The following is a 212-amino-acid chain: Uridine kinase (212 aa).

Residue 13 to 20 participates in ATP binding; sequence GASASGKS.

It belongs to the uridine kinase family.

It localises to the cytoplasm. The enzyme catalyses uridine + ATP = UMP + ADP + H(+). It catalyses the reaction cytidine + ATP = CMP + ADP + H(+). The protein operates within pyrimidine metabolism; CTP biosynthesis via salvage pathway; CTP from cytidine: step 1/3. It functions in the pathway pyrimidine metabolism; UMP biosynthesis via salvage pathway; UMP from uridine: step 1/1. The protein is Uridine kinase of Shewanella putrefaciens (strain CN-32 / ATCC BAA-453).